The following is a 74-amino-acid chain: Brevinin-2Tb (74 aa).

A signal peptide spans 1–22 (MFTMKKSLLLFFFLGTISLSLC). Positions 23 to 40 (QEERNADEDDGEMTEEEK) are excised as a propeptide. Residues Cys-68 and Cys-74 are joined by a disulfide bond.

The protein belongs to the frog skin active peptide (FSAP) family. Brevinin subfamily. As to expression, expressed by the skin glands.

It localises to the secreted. In terms of biological role, antimicrobial peptide. The chain is Brevinin-2Tb from Rana temporaria (European common frog).